The chain runs to 268 residues: MADS-box protein FBP24 (268 aa).

An MADS-box domain is found at 4–64 (MGRGKIEVKR…GKLFEYCSQP (61 aa)). Positions 88-178 (RVQLYDEVAK…YQWLMNNQMY (91 aa)) constitute a K-box domain. A disordered region spans residues 243–268 (NSISPYRLQPSHPNLQDSHVHGPSYD).

Its subcellular location is the nucleus. Probable transcription factor. The chain is MADS-box protein FBP24 (FBP24) from Petunia hybrida (Petunia).